Here is a 412-residue protein sequence, read N- to C-terminus: Maintenance of mitochondrial morphology protein 1 (412 aa).

Residues 1–19 (MAQDVCPTRSEPSLSFLQG) lie on the Lumenal side of the membrane. The helical transmembrane segment at 20 to 40 (LILGQLSVVLLIAAFIKFFIF) threads the bilayer. Topologically, residues 41 to 412 (GEAPSAEETA…GSLPGIDMPT (372 aa)) are cytoplasmic. The SMP-LTD domain occupies 121 to 337 (QPESLDWFNV…EPRFQEIELP (217 aa)). Over residues 372 to 384 (ARQELDTETDGLR) the composition is skewed to basic and acidic residues. The interval 372 to 412 (ARQELDTETDGLRYRRRPVGDDTYSVSGSMPGSLPGIDMPT) is disordered.

The protein belongs to the MMM1 family. As to quaternary structure, homodimer. Component of the ER-mitochondria encounter structure (ERMES) or MDM complex, composed of MMM1, MDM10, MDM12 and MDM34. An MMM1 homodimer associates with one molecule of MDM12 on each side in a pairwise head-to-tail manner, and the SMP-LTD domains of MMM1 and MDM12 generate a continuous hydrophobic tunnel for phospholipid trafficking.

It localises to the endoplasmic reticulum membrane. Its function is as follows. Component of the ERMES/MDM complex, which serves as a molecular tether to connect the endoplasmic reticulum (ER) and mitochondria. Components of this complex are involved in the control of mitochondrial shape and protein biogenesis, and function in nonvesicular lipid trafficking between the ER and mitochondria. The MDM12-MMM1 subcomplex functions in the major beta-barrel assembly pathway that is responsible for biogenesis of all outer membrane beta-barrel proteins, and acts in a late step after the SAM complex. The MDM10-MDM12-MMM1 subcomplex further acts in the TOM40-specific pathway after the action of the MDM12-MMM1 complex. Essential for establishing and maintaining the structure of mitochondria and maintenance of mtDNA nucleoids. This is Maintenance of mitochondrial morphology protein 1 from Podospora anserina (strain S / ATCC MYA-4624 / DSM 980 / FGSC 10383) (Pleurage anserina).